The primary structure comprises 83 residues: MKASRFLALAGLVLLFVVGYASESEEKEFPRELLSKIFAVDDFKGEERGCKGFGDSCTPGKNECCPNYACSSKHKWCKVYLGK.

Positions 1–21 are cleaved as a signal peptide; it reads MKASRFLALAGLVLLFVVGYA. A propeptide spanning residues 22-48 is cleaved from the precursor; that stretch reads SESEEKEFPRELLSKIFAVDDFKGEER. 3 disulfides stabilise this stretch: Cys-50-Cys-65, Cys-57-Cys-70, and Cys-64-Cys-77. The residue at position 81 (Leu-81) is a Leucine amide.

Belongs to the neurotoxin 10 (Hwtx-1) family. 15 (Hntx-3) subfamily. Monomer. In terms of tissue distribution, expressed by the venom gland.

The protein localises to the secreted. Its function is as follows. Selective antagonist of neuronal tetrodotoxin (TTX)-sensitive voltage-gated sodium channels (IC(50)=1270 nM on Nav1.1/SCN1A, 270 nM on Nav1.2/SCN2A, 491 nM on Nav1.3/SCN3A and 232 nM on Nav1.7/SCN9A). This toxin suppress Nav1.7 current amplitude without significantly altering the activation, inactivation, and repriming kinetics. Short extreme depolarizations partially activate the toxin-bound channel, indicating voltage-dependent inhibition of this toxin. This toxin increases the deactivation of the Nav1.7 current after extreme depolarizations. The toxin-Nav1.7 complex is gradually dissociated upon prolonged strong depolarizations in a voltage-dependent manner, and the unbound toxin rebinds to Nav1.7 after a long repolarization. Moreover, analysis of chimeric channels showed that the DIIS3-S4 linker is critical for toxin binding to Nav1.7. These data are consistent with this toxin interacting with Nav1.7 site 4 and trapping the domain II voltage sensor in the closed state. The polypeptide is Hainantoxin-III 5 (Cyriopagopus hainanus (Chinese bird spider)).